The chain runs to 525 residues: GMP synthase [glutamine-hydrolyzing] (525 aa).

The 199-residue stretch at 9-207 (RILILDFGSQ…VRDICQCEAL (199 aa)) folds into the Glutamine amidotransferase type-1 domain. Cysteine 86 functions as the Nucleophile in the catalytic mechanism. Catalysis depends on residues histidine 181 and glutamate 183. Positions 208–400 (WTPAKIIDDA…LGLPYDMLYR (193 aa)) constitute a GMPS ATP-PPase domain. 235-241 (SGGVDSS) lines the ATP pocket.

Homodimer.

It carries out the reaction XMP + L-glutamine + ATP + H2O = GMP + L-glutamate + AMP + diphosphate + 2 H(+). It participates in purine metabolism; GMP biosynthesis; GMP from XMP (L-Gln route): step 1/1. Its function is as follows. Catalyzes the synthesis of GMP from XMP. The chain is GMP synthase [glutamine-hydrolyzing] from Salmonella paratyphi B (strain ATCC BAA-1250 / SPB7).